Consider the following 119-residue polypeptide: Large ribosomal subunit protein uL18 (119 aa).

It belongs to the universal ribosomal protein uL18 family. Part of the 50S ribosomal subunit; part of the 5S rRNA/L5/L18/L25 subcomplex. Contacts the 5S and 23S rRNAs.

Its function is as follows. This is one of the proteins that bind and probably mediate the attachment of the 5S RNA into the large ribosomal subunit, where it forms part of the central protuberance. The sequence is that of Large ribosomal subunit protein uL18 from Oceanobacillus iheyensis (strain DSM 14371 / CIP 107618 / JCM 11309 / KCTC 3954 / HTE831).